The chain runs to 223 residues: Mating-type protein ALPHA2 (223 aa).

Positions 151–213 form a DNA-binding region, homeobox; TALE-type; that stretch reads EFKKGKRFLK…NRRRKDKITE (63 aa).

The protein belongs to the TALE/M-ATYP homeobox family. As to quaternary structure, forms a heterodimer with A1.

The protein localises to the nucleus. Mating type proteins are sequence specific DNA-binding proteins that act as master switches in yeast differentiation by controlling gene expression in a cell type-specific fashion. Transcriptional corepressor that acts in conjunction with A1 to repress transcription of haploid-specific genes. This chain is Mating-type protein ALPHA2 (HMLALPHA2), found in Kluyveromyces lactis (strain ATCC 8585 / CBS 2359 / DSM 70799 / NBRC 1267 / NRRL Y-1140 / WM37) (Yeast).